The primary structure comprises 269 residues: Formamidopyrimidine-DNA glycosylase (269 aa).

Proline 2 serves as the catalytic Schiff-base intermediate with DNA. Glutamate 3 serves as the catalytic Proton donor. Residue lysine 57 is the Proton donor; for beta-elimination activity of the active site. DNA-binding residues include histidine 90, arginine 109, and lysine 150. The FPG-type zinc-finger motif lies at 235 to 269 (RVYGRNGEPCRTCGTPIETAKHGQRSTFFCRRCQK). The active-site Proton donor; for delta-elimination activity is arginine 259.

The protein belongs to the FPG family. In terms of assembly, monomer. The cofactor is Zn(2+).

It carries out the reaction Hydrolysis of DNA containing ring-opened 7-methylguanine residues, releasing 2,6-diamino-4-hydroxy-5-(N-methyl)formamidopyrimidine.. It catalyses the reaction 2'-deoxyribonucleotide-(2'-deoxyribose 5'-phosphate)-2'-deoxyribonucleotide-DNA = a 3'-end 2'-deoxyribonucleotide-(2,3-dehydro-2,3-deoxyribose 5'-phosphate)-DNA + a 5'-end 5'-phospho-2'-deoxyribonucleoside-DNA + H(+). Its function is as follows. Involved in base excision repair of DNA damaged by oxidation or by mutagenic agents. Acts as a DNA glycosylase that recognizes and removes damaged bases. Has a preference for oxidized purines, such as 7,8-dihydro-8-oxoguanine (8-oxoG). Has AP (apurinic/apyrimidinic) lyase activity and introduces nicks in the DNA strand. Cleaves the DNA backbone by beta-delta elimination to generate a single-strand break at the site of the removed base with both 3'- and 5'-phosphates. In Pectobacterium carotovorum subsp. carotovorum (strain PC1), this protein is Formamidopyrimidine-DNA glycosylase.